Here is a 336-residue protein sequence, read N- to C-terminus: Casein kinase II subunit alpha (336 aa).

The region spanning Tyr37 to Phe322 is the Protein kinase domain. ATP contacts are provided by residues Leu43–Val51 and Lys66. The active-site Proton acceptor is Asp154.

The protein belongs to the protein kinase superfamily. Ser/Thr protein kinase family. CK2 subfamily. As to quaternary structure, tetramer of two alpha and two beta chains. It depends on Mg(2+) as a cofactor.

The protein resides in the nucleus. It is found in the nucleolus. The catalysed reaction is L-seryl-[protein] + ATP = O-phospho-L-seryl-[protein] + ADP + H(+). It catalyses the reaction L-threonyl-[protein] + ATP = O-phospho-L-threonyl-[protein] + ADP + H(+). Functionally, casein kinases are operationally defined by their preferential utilization of acidic proteins such as caseins as substrates. The alpha chain contains the catalytic site. May participate in Wnt signaling. The polypeptide is Casein kinase II subunit alpha (CkIIalpha) (Drosophila melanogaster (Fruit fly)).